A 161-amino-acid chain; its full sequence is Small ribosomal subunit protein uS8m (161 aa).

The protein belongs to the universal ribosomal protein uS8 family. In terms of assembly, component of the mitochondrial small ribosomal subunit (mt-SSU). Mature N.crassa 74S mitochondrial ribosomes consist of a small (37S) and a large (54S) subunit. The 37S small subunit contains a 16S ribosomal RNA (16S mt-rRNA) and 32 different proteins. The 54S large subunit contains a 23S rRNA (23S mt-rRNA) and 42 different proteins.

It localises to the mitochondrion. In terms of biological role, component of the mitochondrial ribosome (mitoribosome), a dedicated translation machinery responsible for the synthesis of mitochondrial genome-encoded proteins, including at least some of the essential transmembrane subunits of the mitochondrial respiratory chain. The mitoribosomes are attached to the mitochondrial inner membrane and translation products are cotranslationally integrated into the membrane. The chain is Small ribosomal subunit protein uS8m (mrps8) from Neurospora crassa (strain ATCC 24698 / 74-OR23-1A / CBS 708.71 / DSM 1257 / FGSC 987).